A 441-amino-acid polypeptide reads, in one-letter code: Synaptotagmin-1 (441 aa).

Residues 1–69 (MVKLDFSSQD…DVVKEKVMQQ (69 aa)) are Vesicular-facing. A helical membrane pass occupies residues 70–96 (TGMPEWAFVFLGFVFILLVLACAFCLI). At 97–441 (RKLFGKKRHG…EEGDKKDDKK (345 aa)) the chain is on the cytoplasmic side. C2 domains lie at 159-278 (KLGR…EEWK) and 292-425 (SLGD…AQWH). Residues D190, D196, D248, F249, D250, S253, K254, D256, D323, D329, D383, D385, and D391 each contribute to the Ca(2+) site.

This sequence belongs to the synaptotagmin family. Ca(2+) is required as a cofactor. Localized to regions known to be rich in synapses and appears to be associated with synaptic vesicles. Also found in some non-neuronal secretory structures.

The protein localises to the cytoplasmic vesicle. The protein resides in the secretory vesicle. Its subcellular location is the synaptic vesicle membrane. It localises to the synapse. Its function is as follows. May have a regulatory role in the membrane interactions during trafficking of synaptic vesicles at the active zone of the synapse. It binds acidic phospholipids with a specificity that requires the presence of both an acidic head group and a diacyl backbone. Involved in necrotic cell death. This Caenorhabditis elegans protein is Synaptotagmin-1 (snt-1).